The sequence spans 360 residues: Phospho-N-acetylmuramoyl-pentapeptide-transferase (360 aa).

Transmembrane regions (helical) follow at residues 27–47 (IVSLLTALFLSLWMGPRLIAW), 72–92 (PTMGGLMILTSITISVLMWAY), 94–114 (SNPYVWCVLFVLVGYGIVGFI), 132–152 (WKYFWQSVIALAVAFTMFAVG), 168–188 (IMPQLGLWYVLLAYFVIVGTS), 199–219 (GLAIMPTVFVAAGLALVAWAT), 235–255 (FAGELVVVCTAIVGAGLGFLW), 263–283 (VFMGDVGSLALGGALGTIAVL), 288–308 (FLLLIMGGVFVVETLSVILQV), and 338–358 (VIVRFWIISLMLVLIGLATLK).

Belongs to the glycosyltransferase 4 family. MraY subfamily. Requires Mg(2+) as cofactor.

The protein localises to the cell inner membrane. The catalysed reaction is UDP-N-acetyl-alpha-D-muramoyl-L-alanyl-gamma-D-glutamyl-meso-2,6-diaminopimeloyl-D-alanyl-D-alanine + di-trans,octa-cis-undecaprenyl phosphate = di-trans,octa-cis-undecaprenyl diphospho-N-acetyl-alpha-D-muramoyl-L-alanyl-D-glutamyl-meso-2,6-diaminopimeloyl-D-alanyl-D-alanine + UMP. It participates in cell wall biogenesis; peptidoglycan biosynthesis. In terms of biological role, catalyzes the initial step of the lipid cycle reactions in the biosynthesis of the cell wall peptidoglycan: transfers peptidoglycan precursor phospho-MurNAc-pentapeptide from UDP-MurNAc-pentapeptide onto the lipid carrier undecaprenyl phosphate, yielding undecaprenyl-pyrophosphoryl-MurNAc-pentapeptide, known as lipid I. The sequence is that of Phospho-N-acetylmuramoyl-pentapeptide-transferase from Sodalis glossinidius (strain morsitans).